A 405-amino-acid polypeptide reads, in one-letter code: L-carnitine CoA-transferase (405 aa).

Residues K97 and R104 each contribute to the CoA site. D169 acts as the Nucleophile in catalysis.

The protein belongs to the CoA-transferase III family. CaiB subfamily. As to quaternary structure, homodimer.

The protein localises to the cytoplasm. It catalyses the reaction crotonobetainyl-CoA + (R)-carnitine = crotonobetaine + (R)-carnitinyl-CoA. The enzyme catalyses 4-(trimethylamino)butanoyl-CoA + (R)-carnitine = (R)-carnitinyl-CoA + 4-(trimethylamino)butanoate. It participates in amine and polyamine metabolism; carnitine metabolism. In terms of biological role, catalyzes the reversible transfer of the CoA moiety from gamma-butyrobetainyl-CoA to L-carnitine to generate L-carnitinyl-CoA and gamma-butyrobetaine. Is also able to catalyze the reversible transfer of the CoA moiety from gamma-butyrobetainyl-CoA or L-carnitinyl-CoA to crotonobetaine to generate crotonobetainyl-CoA. The polypeptide is L-carnitine CoA-transferase (Salmonella gallinarum (strain 287/91 / NCTC 13346)).